The following is a 344-amino-acid chain: [LysW]-L-2-aminoadipate 6-phosphate reductase (344 aa).

NADP(+)-binding positions include 12–15 (SGYA), 36–38 (SRR), and L75. C148 is a catalytic residue. 3 residues coordinate NADP(+): S180, A184, and N312.

Belongs to the NAGSA dehydrogenase family. Type 1 subfamily. LysY sub-subfamily. As to quaternary structure, homotetramer. Interacts with LysW. May form a ternary complex with LysW and LysZ.

Its subcellular location is the cytoplasm. The enzyme catalyses [amino-group carrier protein]-C-terminal-N-(1-carboxy-5-oxopentan-1-yl)-L-glutamine + phosphate + NADP(+) = [amino-group carrier protein]-C-terminal-N-(1-carboxy-5-phosphooxy-5-oxopentan-1-yl)-L-glutamine + NADPH + H(+). It participates in amino-acid biosynthesis; L-lysine biosynthesis via AAA pathway; L-lysine from L-alpha-aminoadipate (Thermus route): step 3/5. Its function is as follows. Catalyzes the NADPH-dependent reduction of [LysW]-aminoadipate 6-phosphate to yield [LysW]-aminoadipate 6-semialdehyde. This chain is [LysW]-L-2-aminoadipate 6-phosphate reductase, found in Thermus thermophilus (strain ATCC BAA-163 / DSM 7039 / HB27).